A 196-amino-acid chain; its full sequence is uncharacterized protein (196 aa).

S-adenosyl-L-methionine-binding positions include 44-46 (TTA), Gly80, Val100, and 107-109 (PSL).

This sequence belongs to the class IV-like SAM-binding methyltransferase superfamily. RNA methyltransferase TrmH family.

This is an uncharacterized protein from Serratia marcescens.